A 957-amino-acid chain; its full sequence is Collagen alpha-1(XXI) chain (957 aa).

An N-terminal signal peptide occupies residues 1 to 16; the sequence is MPGIIYILCSILLIES. The 175-residue stretch at 37-211 folds into the VWFA domain; sequence DLVFILDGSW…RIREIMKQKL (175 aa). Residues 230-412 form the Laminin G-like domain; the sequence is GFDILLGLGI…LQKLRIYCDP (183 aa). 2 disordered regions span residues 441-788 and 820-935; these read PAPC…GKEQ and CKTQ…DAGI. Collagen-like domains lie at 448 to 501, 502 to 543, 544 to 591, 592 to 642, 643 to 684, 685 to 741, 742 to 786, and 825 to 882; these read PGEK…PRGF, AGLK…DKGD, IGID…EEGK, PGPP…ISGP, EGIS…IPGQ, QGYT…EIGE, HGHR…QQGK, and GSPG…GNKG. The span at 483–498 shows a compositional bias: low complexity; sequence TSGSPGIPGSPGVQGP. Basic and acidic residues predominate over residues 535–556; it reads MGPKGDKGDIGIDGKKGTKGDK. Composition is skewed to low complexity over residues 597–616 and 633–649; these read MEGL…DGAN and PTGT…SGPQ. Over residues 733–744 the composition is skewed to basic and acidic residues; sequence KGEKGEIGEHGH. Residues 775 to 786 show a composition bias toward low complexity; sequence QGLPGPKGQQGK.

Belongs to the fibril-associated collagens with interrupted helices (FACIT) family.

Its subcellular location is the secreted. The protein resides in the extracellular space. It is found in the extracellular matrix. It localises to the cytoplasm. The sequence is that of Collagen alpha-1(XXI) chain (col21a1) from Xenopus laevis (African clawed frog).